Consider the following 378-residue polypeptide: Cytochrome b (378 aa).

4 helical membrane passes run phenylalanine 34–methionine 54, tryptophan 78–valine 99, tryptophan 114–leucine 134, and phenylalanine 179–leucine 199. Histidine 84 and histidine 98 together coordinate heme b. The heme b site is built by histidine 183 and histidine 197. Residue histidine 202 coordinates a ubiquinone. The next 4 helical transmembrane spans lie at phenylalanine 227–serine 247, leucine 289–asparagine 309, isoleucine 321–alanine 341, and tyrosine 348–leucine 368.

It belongs to the cytochrome b family. The main subunits of complex b-c1 are: cytochrome b, cytochrome c1 and the Rieske protein. Requires heme b as cofactor.

Its subcellular location is the mitochondrion inner membrane. Functionally, component of the ubiquinol-cytochrome c reductase complex (complex III or cytochrome b-c1 complex) that is part of the mitochondrial respiratory chain. The b-c1 complex mediates electron transfer from ubiquinol to cytochrome c. Contributes to the generation of a proton gradient across the mitochondrial membrane that is then used for ATP synthesis. The protein is Cytochrome b (mt:Cyt-b) of Drosophila sechellia (Fruit fly).